A 227-amino-acid chain; its full sequence is MAYPMQLGLQDATSPIMEELMNFHDHTLMIVFLISSLVLYLISLMLTTKLIHTNTMDAQEVETIWTILPAIILVLIALPSLRILYMMDEINNPVLTVKTMGHQWYWSYEYTDYEDLCFDSYMIPTNELKPGELRLLEVDNRVILPIELPIRMLISSEDVLHSWAVPSLGLKTDAIPGRLNQATVTSNRPGIFYGQCSEICGSNHSFMPIVLEMIPLKFFENWSSSMT.

Residues 1–14 (MAYPMQLGLQDATS) lie on the Mitochondrial intermembrane side of the membrane. Residues 15–45 (PIMEELMNFHDHTLMIVFLISSLVLYLISLM) traverse the membrane as a helical segment. Topologically, residues 46–59 (LTTKLIHTNTMDAQ) are mitochondrial matrix. Residues 60–87 (EVETIWTILPAIILVLIALPSLRILYMM) form a helical membrane-spanning segment. Over 88–227 (DEINNPVLTV…FFENWSSSMT (140 aa)) the chain is Mitochondrial intermembrane. Residues H161, C196, E198, C200, H204, and M207 each contribute to the Cu cation site. Position 198 (E198) interacts with Mg(2+).

This sequence belongs to the cytochrome c oxidase subunit 2 family. In terms of assembly, component of the cytochrome c oxidase (complex IV, CIV), a multisubunit enzyme composed of 14 subunits. The complex is composed of a catalytic core of 3 subunits MT-CO1, MT-CO2 and MT-CO3, encoded in the mitochondrial DNA, and 11 supernumerary subunits COX4I, COX5A, COX5B, COX6A, COX6B, COX6C, COX7A, COX7B, COX7C, COX8 and NDUFA4, which are encoded in the nuclear genome. The complex exists as a monomer or a dimer and forms supercomplexes (SCs) in the inner mitochondrial membrane with NADH-ubiquinone oxidoreductase (complex I, CI) and ubiquinol-cytochrome c oxidoreductase (cytochrome b-c1 complex, complex III, CIII), resulting in different assemblies (supercomplex SCI(1)III(2)IV(1) and megacomplex MCI(2)III(2)IV(2)). Found in a complex with TMEM177, COA6, COX18, COX20, SCO1 and SCO2. Interacts with TMEM177 in a COX20-dependent manner. Interacts with COX20. Interacts with COX16. The cofactor is Cu cation.

Its subcellular location is the mitochondrion inner membrane. The enzyme catalyses 4 Fe(II)-[cytochrome c] + O2 + 8 H(+)(in) = 4 Fe(III)-[cytochrome c] + 2 H2O + 4 H(+)(out). Its function is as follows. Component of the cytochrome c oxidase, the last enzyme in the mitochondrial electron transport chain which drives oxidative phosphorylation. The respiratory chain contains 3 multisubunit complexes succinate dehydrogenase (complex II, CII), ubiquinol-cytochrome c oxidoreductase (cytochrome b-c1 complex, complex III, CIII) and cytochrome c oxidase (complex IV, CIV), that cooperate to transfer electrons derived from NADH and succinate to molecular oxygen, creating an electrochemical gradient over the inner membrane that drives transmembrane transport and the ATP synthase. Cytochrome c oxidase is the component of the respiratory chain that catalyzes the reduction of oxygen to water. Electrons originating from reduced cytochrome c in the intermembrane space (IMS) are transferred via the dinuclear copper A center (CU(A)) of subunit 2 and heme A of subunit 1 to the active site in subunit 1, a binuclear center (BNC) formed by heme A3 and copper B (CU(B)). The BNC reduces molecular oxygen to 2 water molecules using 4 electrons from cytochrome c in the IMS and 4 protons from the mitochondrial matrix. This Desmodillus auricularis (Cape short-eared gerbil) protein is Cytochrome c oxidase subunit 2 (MT-CO2).